The primary structure comprises 501 residues: Microtubule-associated protein mmb1 (501 aa).

Polar residues-rich tracts occupy residues 61–95 (NISS…TNNV), 103–122 (RNPS…SNNA), and 132–168 (HENS…SSNA). Disordered stretches follow at residues 61–274 (NISS…VKVN), 328–381 (VSRN…TTGN), and 478–501 (NQTS…NRMI). A compositionally biased stretch (low complexity) spans 234 to 252 (SSVVRPPTRTSTTRPLSRV). 3 stretches are compositionally biased toward polar residues: residues 253–274 (NVTN…VKVN), 367–381 (SRIQ…TTGN), and 478–495 (NQTS…SSPL).

The protein localises to the cytoplasm. It localises to the cytoskeleton. In terms of biological role, involved in the cell polarity process and in regulation of microtubule growth. Has a role in meiosis. Involved in microtubule dynamics. Binds to mitochondria and microtubules, attaching the tubular mitochondria to the microtubule lattice at multiple discrete interaction sites. This Schizosaccharomyces pombe (strain 972 / ATCC 24843) (Fission yeast) protein is Microtubule-associated protein mmb1.